Reading from the N-terminus, the 135-residue chain is L-ectoine synthase (135 aa).

This sequence belongs to the ectoine synthase family.

It catalyses the reaction (2S)-4-acetamido-2-aminobutanoate = L-ectoine + H2O. It functions in the pathway amine and polyamine biosynthesis; ectoine biosynthesis; L-ectoine from L-aspartate 4-semialdehyde: step 3/3. Its function is as follows. Catalyzes the circularization of gamma-N-acetyl-alpha,gamma-diaminobutyric acid (ADABA) to ectoine (1,4,5,6-tetrahydro-2-methyl-4-pyrimidine carboxylic acid), which is an excellent osmoprotectant. The polypeptide is L-ectoine synthase (Saccharopolyspora erythraea (strain ATCC 11635 / DSM 40517 / JCM 4748 / NBRC 13426 / NCIMB 8594 / NRRL 2338)).